The sequence spans 354 residues: MHHPLPPDDTLYDQVRPILWTGHFLKLLDQRKLPFVVEYVECHSSEDVTQAIRTLIVRGAPAIGIVAGWGAVLAAREIEAVDGIEALCKLEPALQRLHAARPTAVNLAWVLARMRRTLSAAHADWRQVMECEAESIAREDLTANRCMGAYGAALIPIGSGVLTHCNTGSLATAGFGTALGVIRDGIAQGRIARVFVGETRPWLQGARLTVWELQQDGIDATLIADSAAAHLMKSGQVQWVIVGADRICANGDTANKIGTYQLAITARHHGVKFMVVASAATVDMDTVAGEAIEIEQRDPEELLGVSGVRTVAEGIAAWNPVFDVTPGALIDAIVTERGVIQSPDAAQMRATFGN.

Substrate is bound by residues 58–60 (RGA), arginine 101, and glutamine 204. Aspartate 245 functions as the Proton donor in the catalytic mechanism. 255 to 256 (NK) serves as a coordination point for substrate.

Belongs to the eIF-2B alpha/beta/delta subunits family. MtnA subfamily.

The catalysed reaction is 5-(methylsulfanyl)-alpha-D-ribose 1-phosphate = 5-(methylsulfanyl)-D-ribulose 1-phosphate. It participates in amino-acid biosynthesis; L-methionine biosynthesis via salvage pathway; L-methionine from S-methyl-5-thio-alpha-D-ribose 1-phosphate: step 1/6. Functionally, catalyzes the interconversion of methylthioribose-1-phosphate (MTR-1-P) into methylthioribulose-1-phosphate (MTRu-1-P). This Xylella fastidiosa (strain M23) protein is Methylthioribose-1-phosphate isomerase.